Here is a 191-residue protein sequence, read N- to C-terminus: 3-hydroxyanthranilate 3,4-dioxygenase 2 (191 aa).

Residue Arg48 coordinates O2. Positions 52, 73, and 111 each coordinate Fe cation. A substrate-binding site is contributed by Glu73. Arg115 and Glu125 together coordinate substrate.

This sequence belongs to the 3-HAO family. It depends on Fe(2+) as a cofactor.

The protein resides in the cytoplasm. It catalyses the reaction 3-hydroxyanthranilate + O2 = (2Z,4Z)-2-amino-3-carboxymuconate 6-semialdehyde. Its pathway is cofactor biosynthesis; NAD(+) biosynthesis; quinolinate from L-kynurenine: step 3/3. In terms of biological role, catalyzes the oxidative ring opening of 3-hydroxyanthranilate to 2-amino-3-carboxymuconate semialdehyde, which spontaneously cyclizes to quinolinate. This is 3-hydroxyanthranilate 3,4-dioxygenase 2 (bna1-2) from Aspergillus clavatus (strain ATCC 1007 / CBS 513.65 / DSM 816 / NCTC 3887 / NRRL 1 / QM 1276 / 107).